A 1240-amino-acid polypeptide reads, in one-letter code: Cohesin subunit SA-3 (1240 aa).

Residues 1-25 are compositionally biased toward low complexity; it reads MPTLWSPSTQHHGSSSGSESSPLQK. The segment at 1 to 108 is disordered; it reads MPTLWSPSTQ…VSSGNGKNES (108 aa). Positions 97 to 108 are enriched in polar residues; that stretch reads RIVSSGNGKNES. The SCD domain occupies 324–409; that stretch reads FVHRYRDILP…NRFKDRMVSM (86 aa). 2 disordered regions span residues 1077–1154 and 1213–1240; these read AEAS…PELI and DKML…MEDF. Positions 1115 to 1125 are enriched in polar residues; it reads GPTTPTLTSTA. Residues 1126–1141 are compositionally biased toward basic residues; it reads VKRKQSLRTVGKKQKG. Phosphoserine is present on serine 1218.

Belongs to the SCC3 family. Component of the meiosis-specific cohesin complex, which also contains the SMC1 (SMC1A or SMC1B) and SMC3 heterodimer. Such complex likely contains RAD21, or the meiosis-specific related protein REC8. Interacts with CCDC79/TERB1; recruiting cohesin to telomeres to develop structural rigidity. In terms of processing, phosphorylated. In terms of tissue distribution, testis specific.

It localises to the nucleus. The protein localises to the chromosome. The protein resides in the centromere. Functionally, meiosis specific component of cohesin complex. The cohesin complex is required for the cohesion of sister chromatids after DNA replication. The cohesin complex apparently forms a large proteinaceous ring within which sister chromatids can be trapped. At anaphase, the complex is cleaved and dissociates from chromatin, allowing sister chromatids to segregate. The meiosis-specific cohesin complex probably replaces mitosis specific cohesin complex when it dissociates from chromatin during prophase I. In Mus musculus (Mouse), this protein is Cohesin subunit SA-3 (Stag3).